Consider the following 1395-residue polypeptide: Adventurous-gliding motility protein Z (1395 aa).

The Response regulatory domain maps to 4-122 (RVLIVESEHD…ELAALSHGIV (119 aa)). Position 48 is a 4-aspartylphosphate (aspartate 48). Disordered regions lie at residues 137–172 (LNGT…AMTE), 874–893 (AAES…GLRS), 919–947 (EQHA…ARAH), 1212–1249 (AAES…AAKQ), 1287–1312 (RYKS…EDDE), and 1326–1395 (AAAA…ELDK). Residues 213 to 911 (EGKIQILRDE…LEQTHGQLAA (699 aa)) are a coiled coil. Basic and acidic residues-rich tracts occupy residues 919–928 (EQHAHQESRK) and 1228–1249 (QKER…AAKQ). Low complexity-rich tracts occupy residues 1291–1306 (KSAT…AKPA) and 1326–1352 (AAAA…KKAP). The span at 1382 to 1395 (EDDDWTALVDELDK) shows a compositional bias: acidic residues.

As to quaternary structure, interacts with MglA.

It is found in the cytoplasm. Required for adventurous-gliding motility (A motility), in response to environmental signals sensed by the frz chemosensory system. Forms ordered clusters that span the cell length and that remain stationary relative to the surface across which the cells move, serving as anchor points (focal, transient adhesion sites) that allow the bacterium to move forward. Clusters disassemble at the lagging cell pole. This is Adventurous-gliding motility protein Z (aglZ) from Myxococcus xanthus (strain DK1622).